We begin with the raw amino-acid sequence, 317 residues long: ADP-L-glycero-D-manno-heptose-6-epimerase (317 aa).

NADP(+) is bound by residues 10–11 (FI), 31–32 (DD), K38, K53, 75–79 (QGACS), and N92. Y139 acts as the Proton acceptor in catalysis. K143 contacts NADP(+). N166 contributes to the substrate binding site. NADP(+)-binding residues include V167 and K175. The active-site Proton acceptor is the K175. Residues G177, H184, 198-201 (FEGV), R211, and Y275 each bind substrate.

The protein belongs to the NAD(P)-dependent epimerase/dehydratase family. HldD subfamily. As to quaternary structure, homopentamer. It depends on NADP(+) as a cofactor.

The enzyme catalyses ADP-D-glycero-beta-D-manno-heptose = ADP-L-glycero-beta-D-manno-heptose. It functions in the pathway nucleotide-sugar biosynthesis; ADP-L-glycero-beta-D-manno-heptose biosynthesis; ADP-L-glycero-beta-D-manno-heptose from D-glycero-beta-D-manno-heptose 7-phosphate: step 4/4. In terms of biological role, catalyzes the interconversion between ADP-D-glycero-beta-D-manno-heptose and ADP-L-glycero-beta-D-manno-heptose via an epimerization at carbon 6 of the heptose. This chain is ADP-L-glycero-D-manno-heptose-6-epimerase, found in Shewanella piezotolerans (strain WP3 / JCM 13877).